Here is a 433-residue protein sequence, read N- to C-terminus: MQVTVETLEGLQRRLNITVPAANIEDAVAAELRNIAKNRRFDGFRKGKVPMKMVAKMYGKAVRQDVLGEVMQRHFIEAIVKEKINPAGAPTFAPVEIGEGKDLVFTATFEVYPEVELKGLENIAVEKPAAEVTDADVAEMLETLRKQQATWKEVDEAAENGKRVSIDFVGSIDGVEFEGGKAENFPLEMGAGRMIPGFEDGIVGKTKGMEFVIDVTFPEDYHAENLKGKAAKFAIKVNKVEARELPELNDEFVARFGVAEGGVDALKAEVRKNMERELKQAIKARIKEQAIEGLVKENEIQVPSALIDQEINVLRQQAAQRFGGNVEAAAQLPRELFEEQAKRRVVVGLLLGEVIRTHELKADEEKVKALITEMATAYEDPSEVVSYYEQNQQLMNNMRNVALEEQAVDAIIAKAKVTEKAISFSELMNPVAA.

The PPIase FKBP-type domain occupies 161–246; the sequence is GKRVSIDFVG…VNKVEARELP (86 aa).

Belongs to the FKBP-type PPIase family. Tig subfamily.

It is found in the cytoplasm. It carries out the reaction [protein]-peptidylproline (omega=180) = [protein]-peptidylproline (omega=0). In terms of biological role, involved in protein export. Acts as a chaperone by maintaining the newly synthesized protein in an open conformation. Functions as a peptidyl-prolyl cis-trans isomerase. This is Trigger factor from Vibrio cholerae serotype O1 (strain ATCC 39541 / Classical Ogawa 395 / O395).